Here is a 211-residue protein sequence, read N- to C-terminus: Thymidylate kinase (211 aa).

Position 7–14 (7–14) interacts with ATP; sequence GIDASGKS.

The protein belongs to the thymidylate kinase family.

The catalysed reaction is dTMP + ATP = dTDP + ADP. Its function is as follows. Phosphorylation of dTMP to form dTDP in both de novo and salvage pathways of dTTP synthesis. The polypeptide is Thymidylate kinase (Mesomycoplasma hyopneumoniae (strain 232) (Mycoplasma hyopneumoniae)).